The primary structure comprises 306 residues: Protoheme IX farnesyltransferase (306 aa).

A run of 9 helical transmembrane segments spans residues 28-48, 53-73, 105-125, 127-147, 156-176, 182-202, 227-244, 246-266, and 283-303; these read LGLV…AIML, FLSS…IMAG, ASIL…LFTI, IETG…YSVW, TIIG…AIEP, AWML…ALAI, LSML…FFMQ, LGTV…LLAI, and FVYS…VTLI.

This sequence belongs to the UbiA prenyltransferase family. Protoheme IX farnesyltransferase subfamily. In terms of assembly, interacts with CtaA.

It localises to the cell membrane. The enzyme catalyses heme b + (2E,6E)-farnesyl diphosphate + H2O = Fe(II)-heme o + diphosphate. Its pathway is porphyrin-containing compound metabolism; heme O biosynthesis; heme O from protoheme: step 1/1. Functionally, converts heme B (protoheme IX) to heme O by substitution of the vinyl group on carbon 2 of heme B porphyrin ring with a hydroxyethyl farnesyl side group. This is Protoheme IX farnesyltransferase from Macrococcus caseolyticus (strain JCSC5402) (Macrococcoides caseolyticum).